Reading from the N-terminus, the 358-residue chain is Alanine racemase (358 aa).

Lys35 serves as the catalytic Proton acceptor; specific for D-alanine. Position 35 is an N6-(pyridoxal phosphate)lysine (Lys35). Arg130 provides a ligand contact to substrate. Tyr255 serves as the catalytic Proton acceptor; specific for L-alanine. Position 303 (Met303) interacts with substrate.

The protein belongs to the alanine racemase family. It depends on pyridoxal 5'-phosphate as a cofactor.

The enzyme catalyses L-alanine = D-alanine. It functions in the pathway amino-acid biosynthesis; D-alanine biosynthesis; D-alanine from L-alanine: step 1/1. Functionally, catalyzes the interconversion of L-alanine and D-alanine. May also act on other amino acids. The protein is Alanine racemase (alr) of Shewanella oneidensis (strain ATCC 700550 / JCM 31522 / CIP 106686 / LMG 19005 / NCIMB 14063 / MR-1).